A 1049-amino-acid polypeptide reads, in one-letter code: Probable disease resistance protein RF9 (1049 aa).

A coiled-coil region spans residues 25–41; sequence QGVEDQVTELKRDLNLL. Positions 139–158 are disordered; it reads GYKQPQGDKQREMRPRFSKD. Over residues 144 to 158 the composition is skewed to basic and acidic residues; sequence QGDKQREMRPRFSKD. The 314-residue stretch at 147 to 460 folds into the NB-ARC domain; the sequence is KQREMRPRFS…AEGIFQPRHY (314 aa). 190–197 serves as a coordination point for ATP; sequence GMGGLGKT. LRR repeat units follow at residues 584 to 608, 609 to 634, 657 to 682, 683 to 707, 776 to 799, 800 to 827, 849 to 873, 896 to 923, 945 to 968, and 990 to 1015; these read LELL…SIGQ, LIHL…NLKL, MQQL…NLVK, LETL…RLRT, PSHL…ILEK, LHQL…GFPQ, MPVL…HLPS, LVHL…GFPQ, MPQL…GFPQ, and MPLL…RFIY.

The protein belongs to the disease resistance NB-LRR family.

Potential disease resistance protein. The polypeptide is Probable disease resistance protein RF9 (RF9) (Arabidopsis thaliana (Mouse-ear cress)).